A 378-amino-acid chain; its full sequence is Erythronate-4-phosphate dehydrogenase (378 aa).

Substrate-binding residues include S45 and T66. Positions 146 and 175 each coordinate NAD(+). R208 is an active-site residue. D232 provides a ligand contact to NAD(+). E237 is an active-site residue. Catalysis depends on H254, which acts as the Proton donor. G257 is an NAD(+) binding site. Y258 lines the substrate pocket.

This sequence belongs to the D-isomer specific 2-hydroxyacid dehydrogenase family. PdxB subfamily. Homodimer.

Its subcellular location is the cytoplasm. It catalyses the reaction 4-phospho-D-erythronate + NAD(+) = (R)-3-hydroxy-2-oxo-4-phosphooxybutanoate + NADH + H(+). It functions in the pathway cofactor biosynthesis; pyridoxine 5'-phosphate biosynthesis; pyridoxine 5'-phosphate from D-erythrose 4-phosphate: step 2/5. Its function is as follows. Catalyzes the oxidation of erythronate-4-phosphate to 3-hydroxy-2-oxo-4-phosphonooxybutanoate. In Escherichia coli (strain K12 / MC4100 / BW2952), this protein is Erythronate-4-phosphate dehydrogenase.